The primary structure comprises 135 residues: Classical arabinogalactan protein 4 (135 aa).

Positions 1–21 (MGSKIVQVFLMLALFATSALA) are cleaved as a signal peptide. Residue Q22 is modified to Pyrrolidone carboxylic acid. Residues 22 to 112 (QAPAPTPTAT…PSDASPAPSA (91 aa)) are disordered. P24, P26, P28, P32, P33, P34, P37, P38, and P39 each carry 4-hydroxyproline. O-linked (Ara...) hydroxyproline glycans are attached at residues P24, P26, P28, P32, P33, P34, P37, P38, and P39. The span at 25–76 (APTPTATPPPATPPPVATPPPVATPPPAATPAPATPPPAATPAPATTPPSVA) shows a compositional bias: pro residues. Low complexity predominate over residues 96–112 (SPSSAPGPSDASPAPSA). A lipid anchor (GPI-anchor amidated serine) is attached at S111. A propeptide spans 112–135 (AAFSNKAFFAGTAFAAIMYAAVLA) (removed in mature form).

This sequence belongs to the classical AGP family. In terms of processing, O-glycosylated on hydroxyprolines; noncontiguous hydroxylproline residues are glycosylated with arabinogalactan. Highly expressed in roots, flowers and leaves.

It localises to the cell membrane. Proteoglycan that seems to be implicated in diverse developmental roles such as differentiation, cell-cell recognition, embryogenesis and programmed cell death. In Arabidopsis thaliana (Mouse-ear cress), this protein is Classical arabinogalactan protein 4 (AGP4).